Here is a 402-residue protein sequence, read N- to C-terminus: Multidrug resistance protein MdtH (402 aa).

The Cytoplasmic segment spans residues 1-12 (MSRVSQARNLGK). The chain crosses the membrane as a helical span at residues 13 to 33 (YFLLIDNMLVVLGFFVVFPLI). Over 34–98 (SIRFVDQMGW…GFATMGIAHE (65 aa)) the chain is Periplasmic. A helical transmembrane segment spans residues 99 to 116 (PWLLWFSCLLSGLGGTLF). Residues 117–138 (DPPRSALVVKLIRPQQRGRFFS) are Cytoplasmic-facing. Residues 139-159 (LLMMQDSAGAVIGALLGSWLL) form a helical membrane-spanning segment. Topologically, residues 160-164 (QYDFR) are periplasmic. Residues 165–185 (LVCATGAVLFVLCAAFNAWLL) traverse the membrane as a helical segment. Residues 186 to 213 (PAWKLSTVRTPVREGMTRVMRDKRFVTY) lie on the Cytoplasmic side of the membrane. The chain crosses the membrane as a helical span at residues 214-234 (VLTLAGYYMLAVQVMLMLPIM). The Periplasmic portion of the chain corresponds to 235–243 (VNDVAGAPS). The helical transmembrane segment at 244 to 264 (AVKWMYAIEACLSLTLLYPIA) threads the bilayer. The Cytoplasmic portion of the chain corresponds to 265-276 (RWSEKHFRLEHR). The chain crosses the membrane as a helical span at residues 277 to 297 (LMAGLLIMSLSMMPVGMVSGL). Topologically, residues 298–299 (QQ) are periplasmic. Residues 300 to 320 (LFNLICLFYIGSIIAEPARET) form a helical membrane-spanning segment. Topologically, residues 321–339 (LSASLADARARGSYMGFSR) are cytoplasmic. A helical membrane pass occupies residues 340–360 (LGLAIGGAIGYIGGGWLFDLG). The Periplasmic segment spans residues 361-367 (KSAHQPE). The helical transmembrane segment at 368-388 (LPWMMLGIIGIFTFLALGWQF) threads the bilayer. The Cytoplasmic segment spans residues 389–402 (SQKRAARRLLERDA).

Belongs to the major facilitator superfamily. DHA1 family. MdtH (TC 2.A.1.2.21) subfamily.

The protein resides in the cell inner membrane. Confers resistance to norfloxacin and enoxacin. The chain is Multidrug resistance protein MdtH from Escherichia coli O9:H4 (strain HS).